Consider the following 155-residue polypeptide: Large ribosomal subunit protein uL13 (155 aa).

It belongs to the universal ribosomal protein uL13 family. In terms of assembly, part of the 50S ribosomal subunit.

Its function is as follows. This protein is one of the early assembly proteins of the 50S ribosomal subunit, although it is not seen to bind rRNA by itself. It is important during the early stages of 50S assembly. The chain is Large ribosomal subunit protein uL13 from Rickettsia typhi (strain ATCC VR-144 / Wilmington).